The primary structure comprises 159 residues: UPF0262 protein TM1040_3562 (159 aa).

The segment at 1–21 (MSRISQIELDDRNLPPPTPEI) is disordered.

The protein belongs to the UPF0262 family.

The sequence is that of UPF0262 protein TM1040_3562 from Ruegeria sp. (strain TM1040) (Silicibacter sp.).